Here is a 229-residue protein sequence, read N- to C-terminus: Ribonuclease 3 (229 aa).

One can recognise an RNase III domain in the interval Trp-4 to Gly-133. A Mg(2+)-binding site is contributed by Glu-46. Asp-50 is an active-site residue. Positions 119 and 122 each coordinate Mg(2+). Glu-122 is an active-site residue. Residues Asp-159–His-228 form the DRBM domain.

This sequence belongs to the ribonuclease III family. In terms of assembly, homodimer. Mg(2+) serves as cofactor.

It localises to the cytoplasm. The enzyme catalyses Endonucleolytic cleavage to 5'-phosphomonoester.. Its function is as follows. Digests double-stranded RNA. Involved in the processing of primary rRNA transcript to yield the immediate precursors to the large and small rRNAs (23S and 16S). Processes some mRNAs, and tRNAs when they are encoded in the rRNA operon. Processes pre-crRNA and tracrRNA of type II CRISPR loci if present in the organism. This is Ribonuclease 3 from Listeria monocytogenes serotype 4b (strain CLIP80459).